A 955-amino-acid polypeptide reads, in one-letter code: Iron-responsive element-binding protein 2 (955 aa).

[4Fe-4S] cluster contacts are provided by C504, C570, and C573.

The protein belongs to the aconitase/IPM isomerase family. [4Fe-4S] cluster is required as a cofactor. In terms of processing, ubiquitinated and degraded by the proteasome in presence of high level of iron and oxygen.

The protein resides in the cytoplasm. In terms of biological role, RNA-binding protein that binds to iron-responsive elements (IRES), which are stem-loop structures found in the 5'-UTR of ferritin, and delta aminolevulinic acid synthase mRNAs, and in the 3'-UTR of transferrin receptor mRNA. Binding to the IRE element in ferritin results in the repression of its mRNA translation. Binding of the protein to the transferrin receptor mRNA inhibits the degradation of this otherwise rapidly degraded mRNA. This is Iron-responsive element-binding protein 2 (ireb2) from Xenopus laevis (African clawed frog).